Reading from the N-terminus, the 120-residue chain is MLKLKTQKVIDAIESKFIKKDLPTLKIGDNVRIGVKIIEGTKERVQFYEGTIIAKKNSSINMTITVRKILQGIGIERVFLVHSPKIDSITVLRSSKVRRAKLYYLRNLRGKASRLKQTFK.

This sequence belongs to the bacterial ribosomal protein bL19 family.

Its subcellular location is the plastid. The protein localises to the chloroplast. The chain is Large ribosomal subunit protein bL19c from Phaeodactylum tricornutum (strain CCAP 1055/1).